A 1028-amino-acid chain; its full sequence is Golgin subfamily A member 2 (1028 aa).

The disordered stretch occupies residues 1–112 (MADQNRQIKL…NRPLSSTESL (112 aa)). Basic and acidic residues predominate over residues 40–60 (KGDQTDAPADRRSPENERVDV). Residues 74–87 (NPASAINTDNSAPQ) show a composition bias toward polar residues. Coiled-coil stretches lie at residues 162–200 (NTQL…EQGA), 233–388 (ARQK…YAVQ), 414–690 (RDST…LLNG), 738–769 (LSRV…LTAL), and 799–840 (HEAL…LSGE). The disordered stretch occupies residues 259–280 (RTLSSVSTQQKQHERHNKELEK). The segment at 756–791 (RRIHQDTRQQLTALSHDHHHHHHHEPHSTCAETDGS) is disordered. The segment at 944–981 (AMDVSSSPQSSTAEIQSQSSERPAADPISSPSLRPQED) is disordered. Residues 945 to 964 (MDVSSSPQSSTAEIQSQSSE) are compositionally biased toward polar residues.

The protein belongs to the GOLGA2 family.

The protein localises to the golgi apparatus. It localises to the cis-Golgi network membrane. The protein resides in the endoplasmic reticulum-Golgi intermediate compartment membrane. Its subcellular location is the cytoplasm. It is found in the cytoskeleton. The protein localises to the spindle pole. Peripheral membrane component of the cis-Golgi stack that acts as a membrane skeleton that maintains the structure of the Golgi apparatus, and as a vesicle thether that facilitates vesicle fusion to the Golgi membrane. Required for normal protein transport from the endoplasmic reticulum to the Golgi apparatus and the cell membrane. Plays a central role in mitotic Golgi disassembly. Also plays a key role in spindle pole assembly and centrosome organization. It probably promotes mitotic spindle pole assembly by activating assembly factors to nucleate microtubules around the Golgi and capture them to couple mitotic membranes to the spindle. Also required for the Golgi ribbon formation and glycosylation of membrane and secretory proteins. The sequence is that of Golgin subfamily A member 2 from Danio rerio (Zebrafish).